The primary structure comprises 24 residues: Bombinin (24 aa).

Asn-24 carries the asparagine amide modification.

It belongs to the bombinin family. Expressed by the skin glands.

The protein localises to the secreted. Has antimicrobial and hemolytic activities. This Bombina variegata (Yellow-bellied toad) protein is Bombinin.